We begin with the raw amino-acid sequence, 432 residues long: Histidine--tRNA ligase (432 aa).

The protein belongs to the class-II aminoacyl-tRNA synthetase family.

Its subcellular location is the cytoplasm. It catalyses the reaction tRNA(His) + L-histidine + ATP = L-histidyl-tRNA(His) + AMP + diphosphate + H(+). In Pyrococcus furiosus (strain ATCC 43587 / DSM 3638 / JCM 8422 / Vc1), this protein is Histidine--tRNA ligase.